Reading from the N-terminus, the 510-residue chain is Probable cytochrome P450 517A2 (510 aa).

A helical membrane pass occupies residues 1-21 (MRILIIIILIIIVFLVKDTIK). C450 serves as a coordination point for heme.

Belongs to the cytochrome P450 family. The cofactor is heme.

The protein resides in the membrane. The protein is Probable cytochrome P450 517A2 (cyp517A2) of Dictyostelium discoideum (Social amoeba).